The chain runs to 133 residues: MAKEFGRPQRVAQEMQKEIALILQREIKDPRLGMMTTVSGVEMSRDLAYAKVYVTFLNDKDEDAVKAGIKALQEASGFIRSLLGKAMRLRIVPELTFFYDNSLVEGMRMSNLVTSVVKHDEERRVNPDDSKEG.

Belongs to the RbfA family. As to quaternary structure, monomer. Binds 30S ribosomal subunits, but not 50S ribosomal subunits or 70S ribosomes.

The protein localises to the cytoplasm. Its function is as follows. One of several proteins that assist in the late maturation steps of the functional core of the 30S ribosomal subunit. Associates with free 30S ribosomal subunits (but not with 30S subunits that are part of 70S ribosomes or polysomes). Required for efficient processing of 16S rRNA. May interact with the 5'-terminal helix region of 16S rRNA. The sequence is that of Ribosome-binding factor A from Escherichia coli O127:H6 (strain E2348/69 / EPEC).